A 98-amino-acid chain; its full sequence is Tax1-binding protein 3 (98 aa).

At S2 the chain carries N-acetylserine. A PDZ domain is found at 12–87 (VVQRVEIHKL…VVRLLVTRQS (76 aa)).

As to quaternary structure, interacts (via its PDZ domain) with GLS2. Interacts (via its PDZ domain) with RTKN (via the C-terminal region); this interaction facilitates Rho-mediated activation of the FOS serum response element (SRE). Interacts (via PDZ domain) with ARHGEF16. Interacts (via PDZ domain) with KCNJ4 (via C-terminus). Competes with LIN7A for KCNJ4 binding. Interacts (via its PDZ domain) with CTNNB1; this interaction inhibits the transcriptional activity of CTNNB1. Interacts with ADGRB2. In terms of tissue distribution, detected in kidney distal convoluted tubules (at protein level).

Its subcellular location is the cytoplasm. It is found in the nucleus. The protein resides in the cell membrane. In terms of biological role, may regulate a number of protein-protein interactions by competing for PDZ domain binding sites. Binds CTNNB1 and may thereby act as an inhibitor of the Wnt signaling pathway. Competes with LIN7A for KCNJ4 binding, and thereby promotes KCNJ4 internalization. May play a role in the Rho signaling pathway. In Rattus norvegicus (Rat), this protein is Tax1-binding protein 3.